Consider the following 564-residue polypeptide: MAFQRRRNNYYNRLRRLLPFICAVSGALLILFALLSILSPPPDDSDRRISKHINYGANDEKKNTPVVFTVPRGGGRSDRDIWRSWNAEFFYGCCNASSKFPNAKAITRNDRYLAIATSGGLNQQRTGIVDAVVAARILNATLVIPKLDQKSYWKDASDFSNIFDVDWFMSFLSKDVKIIEKLPQKGGQTWSPRRMRVPRKCNEKCYINRVLPVLQKRHAVQLNKFDYRLSNKLRDDLQKLRCRVNYHALKFTDPILEMGNELVRRMRKRSKHFIALHLRFEPDMLAFSGCYYGGGEKEKKELGTIRRRWKTLHVNNPEKQRRQGRCPLTPEEVGLMLRALGYGSDVHIYVASGEVYGGEKSLAPLKALFPHFYSKDTIATKMELKPFSSYSSRMAALDFLVCDESDVFVTNNNGNMARILAGRRRYFGHKPTIRPNAKKLYKLFMSKENTTWEEFASRVRTFQKGFMGEPKEVRAGKGEFHENPAACICEDTDAKVKAGKMDSRKFGKKEQKEDEDAELSSSETDYEEDQTDLQDRGLYNGTRLDYDDALSVSEEPELEEMLSD.

A helical; Signal-anchor for type II membrane protein membrane pass occupies residues 17–37 (LLPFICAVSGALLILFALLSI). Residues N95 and N139 are each glycosylated (N-linked (GlcNAc...) asparagine). Residue 277–279 (HLR) coordinates substrate. N-linked (GlcNAc...) asparagine glycosylation occurs at N449. Over residues 501-512 (MDSRKFGKKEQK) the composition is skewed to basic and acidic residues. Residues 501-542 (MDSRKFGKKEQKEDEDAELSSSETDYEEDQTDLQDRGLYNGT) are disordered. The span at 513–532 (EDEDAELSSSETDYEEDQTD) shows a compositional bias: acidic residues. N540 is a glycosylation site (N-linked (GlcNAc...) asparagine).

This sequence belongs to the glycosyltransferase GT106 family.

Its subcellular location is the membrane. The protein operates within glycan metabolism. The sequence is that of O-fucosyltransferase 6 from Arabidopsis thaliana (Mouse-ear cress).